The sequence spans 186 residues: Ribosome-recycling factor (186 aa).

The protein belongs to the RRF family.

It is found in the cytoplasm. In terms of biological role, responsible for the release of ribosomes from messenger RNA at the termination of protein biosynthesis. May increase the efficiency of translation by recycling ribosomes from one round of translation to another. In Paraburkholderia xenovorans (strain LB400), this protein is Ribosome-recycling factor.